The chain runs to 139 residues: Transcription initiation factor IIA small chain homolog (139 aa).

The tract at residues 113–139 (LSAQGPSKRVNRAHAAAAGDDEDDDSD) is disordered.

It belongs to the TFIIA subunit 2 family.

The protein localises to the nucleus. In Caenorhabditis elegans, this protein is Transcription initiation factor IIA small chain homolog.